The sequence spans 199 residues: Imidazoleglycerol-phosphate dehydratase (199 aa).

It belongs to the imidazoleglycerol-phosphate dehydratase family.

It localises to the cytoplasm. The catalysed reaction is D-erythro-1-(imidazol-4-yl)glycerol 3-phosphate = 3-(imidazol-4-yl)-2-oxopropyl phosphate + H2O. It functions in the pathway amino-acid biosynthesis; L-histidine biosynthesis; L-histidine from 5-phospho-alpha-D-ribose 1-diphosphate: step 6/9. The protein is Imidazoleglycerol-phosphate dehydratase of Roseiflexus sp. (strain RS-1).